A 195-amino-acid chain; its full sequence is Iron-sulfur flavoprotein AF_1519 (195 aa).

Positions 45, 48, 51, and 57 each coordinate [4Fe-4S] cluster.

The protein belongs to the SsuE family. Isf subfamily. Homodimer. FMN is required as a cofactor. It depends on [4Fe-4S] cluster as a cofactor.

In terms of biological role, redox-active protein probably involved in electron transport. The protein is Iron-sulfur flavoprotein AF_1519 of Archaeoglobus fulgidus (strain ATCC 49558 / DSM 4304 / JCM 9628 / NBRC 100126 / VC-16).